The chain runs to 379 residues: Succinyl-diaminopimelate desuccinylase (379 aa).

His70 provides a ligand contact to Zn(2+). Residue Asp72 is part of the active site. Residue Asp103 coordinates Zn(2+). Glu137 serves as the catalytic Proton acceptor. Positions 138, 166, and 352 each coordinate Zn(2+).

The protein belongs to the peptidase M20A family. DapE subfamily. In terms of assembly, homodimer. Zn(2+) serves as cofactor. Co(2+) is required as a cofactor.

The catalysed reaction is N-succinyl-(2S,6S)-2,6-diaminopimelate + H2O = (2S,6S)-2,6-diaminopimelate + succinate. Its pathway is amino-acid biosynthesis; L-lysine biosynthesis via DAP pathway; LL-2,6-diaminopimelate from (S)-tetrahydrodipicolinate (succinylase route): step 3/3. In terms of biological role, catalyzes the hydrolysis of N-succinyl-L,L-diaminopimelic acid (SDAP), forming succinate and LL-2,6-diaminopimelate (DAP), an intermediate involved in the bacterial biosynthesis of lysine and meso-diaminopimelic acid, an essential component of bacterial cell walls. This is Succinyl-diaminopimelate desuccinylase from Burkholderia ambifaria (strain ATCC BAA-244 / DSM 16087 / CCUG 44356 / LMG 19182 / AMMD) (Burkholderia cepacia (strain AMMD)).